We begin with the raw amino-acid sequence, 481 residues long: Docking protein 1 (481 aa).

Met-1 is subject to N-acetylmethionine. Residues 4–119 enclose the PH domain; that stretch reads AVMEGPLFLQ…WVQTLCRNAF (116 aa). Ser-48 is modified (phosphoserine). The 109-residue stretch at 151–259 folds into the IRS-type PTB domain; the sequence is EGSQFWVTVQ…HRQKAQGKAG (109 aa). 2 positions are modified to phosphoserine: Ser-269 and Ser-291. The interval 270-293 is disordered; the sequence is HEGEVAEGKLPSPPGPQELLDSPP. Residue Tyr-296 is modified to Phosphotyrosine. The segment at 307–329 is disordered; it reads PCPSQDSLYSDPLDSTSAQAGEG. Positions 310 to 325 are enriched in polar residues; sequence SQDSLYSDPLDSTSAQ. Residues Tyr-337 and Tyr-341 each carry the phosphotyrosine modification. At Tyr-362 the chain carries Phosphotyrosine; by INSR. Tyr-377 bears the Phosphotyrosine mark. Tyr-398 bears the Phosphotyrosine; by INSR mark. The tract at residues 404-481 is disordered; sequence PATDDYAVPP…KTGVKSEGST (78 aa). Tyr-409 is modified (phosphotyrosine). At Ser-416 the chain carries Phosphoserine. Over residues 436–458 the composition is skewed to polar residues; the sequence is ATGSGIKSHNSALYSQVQKSGAS. Tyr-449 is modified (phosphotyrosine). Ser-460 is subject to Phosphoserine.

The protein belongs to the DOK family. Type A subfamily. In terms of assembly, interacts with ABL1. Interacts with RasGAP and INPP5D/SHIP1. Interacts directly with phosphorylated ITGB3. Interacts with SRMS (via the SH2 and SH3 domains). In terms of processing, constitutively tyrosine-phosphorylated. Phosphorylated by TEC. Phosphorylated by LYN. Phosphorylated on tyrosine residues by the insulin receptor kinase. Results in the negative regulation of the insulin signaling pathway. Phosphorylated on tyrosine residues by SRMS. Expressed in pancreas, heart, leukocyte and spleen. Expressed in both resting and activated peripheral blood T-cells. Expressed in breast cancer.

The protein localises to the cytoplasm. Its subcellular location is the nucleus. The protein resides in the perinuclear region. In terms of biological role, DOK proteins are enzymatically inert adaptor or scaffolding proteins. They provide a docking platform for the assembly of multimolecular signaling complexes. DOK1 appears to be a negative regulator of the insulin signaling pathway. Modulates integrin activation by competing with talin for the same binding site on ITGB3. This Homo sapiens (Human) protein is Docking protein 1 (DOK1).